The chain runs to 741 residues: Catalase-peroxidase (741 aa).

The signal sequence occupies residues 1–23; sequence MLKKIVTALGMSGMLLASSNAIA. Positions 102–223 form a cross-link, tryptophyl-tyrosyl-methioninium (Trp-Tyr) (with M-249); it reads WHDAGTYRIY…YAATQMGLIY (122 aa). His-103 (proton acceptor) is an active-site residue. A cross-link (tryptophyl-tyrosyl-methioninium (Tyr-Met) (with W-102)) is located at residues 223–249; sequence YVNPEGPDGKPDIKGAASEIRQAFRAM. Residue His-264 participates in heme b binding.

This sequence belongs to the peroxidase family. Peroxidase/catalase subfamily. Homodimer or homotetramer. Heme b serves as cofactor. Formation of the three residue Trp-Tyr-Met cross-link is important for the catalase, but not the peroxidase activity of the enzyme.

It catalyses the reaction H2O2 + AH2 = A + 2 H2O. The enzyme catalyses 2 H2O2 = O2 + 2 H2O. In terms of biological role, bifunctional enzyme with both catalase and broad-spectrum peroxidase activity. The sequence is that of Catalase-peroxidase from Francisella tularensis subsp. tularensis (strain FSC 198).